Consider the following 994-residue polypeptide: Zinc finger protein basonuclin-1 (994 aa).

Residues 1-29 (MRRRPPSRGGRGAARARETRRQPRHRSGR) are disordered. Positions 240 to 249 (MTFMLPFQFF) are hydrophobic. 2 consecutive C2H2-type zinc fingers follow at residues 357–380 (VFCT…NAVH) and 385–414 (HKCT…PRLH). Disordered regions lie at residues 402-425 (RNRH…RDKD) and 444-472 (TVTS…FPNI). A Nuclear localization signal motif is present at residues 533–539 (PKKKSRK). Phosphoserine is present on residues serine 537 and serine 541. Positions 555–639 (NEKRHNLSSD…HNSERETEQT (85 aa)) are disordered. A compositionally biased stretch (acidic residues) spans 563-578 (SDEDMPLQVVSEDEQE). Residues 603 to 614 (PEGERPCHRESV) are compositionally biased toward basic and acidic residues. A compositionally biased stretch (polar residues) spans 615–630 (IESSGAISQTPEQATH). 2 C2H2-type zinc fingers span residues 720–743 (FQCD…KNMH) and 748–775 (HTCT…LNLH). A compositionally biased stretch (low complexity) spans 859 to 877 (STTSSMKSESSSHSSWDSD). The interval 859-881 (STTSSMKSESSSHSSWDSDGVSE) is disordered. 2 C2H2-type zinc fingers span residues 928 to 951 (ITCH…KTVH) and 956 to 983 (HKCK…PNLH). Positions 970-994 (VRSRNRHSQNPNLHKSLASSPSHLQ) are disordered.

Interacts with HSF2BP (via C-terminus). In terms of processing, phosphorylation on Ser-537 and Ser-541 leads to cytoplasmic localization. In epidermis, primarily detected in cells of the basal or immediately suprabasal layers (at protein level). In hair follicles, mainly expressed in the outer root sheath (at protein level). Expressed in epidermis, testis and foreskin, and to a lower extent in thymus, spleen, mammary glands, placenta, brain and heart. Expressed in the ovary, notably in oocytes.

The protein localises to the nucleus. It localises to the cytoplasm. Its subcellular location is the nucleoplasm. Transcriptional activator. It is likely involved in the regulation of keratinocytes terminal differentiation in squamous epithelia and hair follicles. Required for the maintenance of spermatogenesis. It is involved in the positive regulation of oocyte maturation, probably acting through the control of BMP15 levels and regulation of AKT signaling cascade. May also play a role in the early development of embryos. The chain is Zinc finger protein basonuclin-1 (BNC1) from Homo sapiens (Human).